Consider the following 226-residue polypeptide: Phosphatidylserine decarboxylase proenzyme (226 aa).

Residue Ser-184 is the Schiff-base intermediate with substrate; via pyruvic acid of the active site. Position 184 is a pyruvic acid (Ser); by autocatalysis (Ser-184).

The protein belongs to the phosphatidylserine decarboxylase family. PSD-A subfamily. Heterodimer of a large membrane-associated beta subunit and a small pyruvoyl-containing alpha subunit. Pyruvate is required as a cofactor. Is synthesized initially as an inactive proenzyme. Formation of the active enzyme involves a self-maturation process in which the active site pyruvoyl group is generated from an internal serine residue via an autocatalytic post-translational modification. Two non-identical subunits are generated from the proenzyme in this reaction, and the pyruvate is formed at the N-terminus of the alpha chain, which is derived from the carboxyl end of the proenzyme. The post-translation cleavage follows an unusual pathway, termed non-hydrolytic serinolysis, in which the side chain hydroxyl group of the serine supplies its oxygen atom to form the C-terminus of the beta chain, while the remainder of the serine residue undergoes an oxidative deamination to produce ammonia and the pyruvoyl prosthetic group on the alpha chain.

The protein localises to the cell membrane. The enzyme catalyses a 1,2-diacyl-sn-glycero-3-phospho-L-serine + H(+) = a 1,2-diacyl-sn-glycero-3-phosphoethanolamine + CO2. The protein operates within phospholipid metabolism; phosphatidylethanolamine biosynthesis; phosphatidylethanolamine from CDP-diacylglycerol: step 2/2. Catalyzes the formation of phosphatidylethanolamine (PtdEtn) from phosphatidylserine (PtdSer). This chain is Phosphatidylserine decarboxylase proenzyme, found in Ehrlichia chaffeensis (strain ATCC CRL-10679 / Arkansas).